An 87-amino-acid polypeptide reads, in one-letter code: MTEESLIEYPCDFPIKIMGKSQQGFTQSVLSIVKTYAPDFDDTTLEVRSSRNGAYLSLTCTIQATSRTQLDSLYQALHDHPMVTMLL.

It belongs to the UPF0250 family.

The protein is UPF0250 protein NE1487 of Nitrosomonas europaea (strain ATCC 19718 / CIP 103999 / KCTC 2705 / NBRC 14298).